The chain runs to 517 residues: NEDD8-activating enzyme E1 regulatory subunit (517 aa).

The protein belongs to the ubiquitin-activating E1 family. ULA1 subfamily. As to quaternary structure, heterodimer of uba3 and ula1. The complex binds NEDD8/ubl1 and ubc12.

It localises to the cytoplasm. The protein localises to the nucleus. Its pathway is protein modification; protein neddylation. Regulatory subunit of the dimeric uba3-ula1 E1 enzyme. E1 activates NEDD8/ubl1 by first adenylating its C-terminal glycine residue with ATP, thereafter linking this residue to the side chain of the catalytic cysteine, yielding a NEDD8-UBA3 thioester and free AMP. E1 finally transfers NEDD8 to the catalytic cysteine of ubc12. The chain is NEDD8-activating enzyme E1 regulatory subunit (uba5) from Schizosaccharomyces pombe (strain 972 / ATCC 24843) (Fission yeast).